Consider the following 348-residue polypeptide: [LysW]-L-2-aminoadipate 6-phosphate reductase (348 aa).

An NADP(+)-binding site is contributed by 14–17 (SGYA). Residue cysteine 151 is part of the active site. An NADP(+)-binding site is contributed by asparagine 315.

Belongs to the NAGSA dehydrogenase family. Type 1 subfamily. LysY sub-subfamily.

The protein localises to the cytoplasm. It catalyses the reaction [amino-group carrier protein]-C-terminal-N-(1-carboxy-5-oxopentan-1-yl)-L-glutamine + phosphate + NADP(+) = [amino-group carrier protein]-C-terminal-N-(1-carboxy-5-phosphooxy-5-oxopentan-1-yl)-L-glutamine + NADPH + H(+). Its pathway is amino-acid biosynthesis; L-lysine biosynthesis via AAA pathway; L-lysine from L-alpha-aminoadipate (Thermus route): step 3/5. Its function is as follows. Catalyzes the NADPH-dependent reduction of [LysW]-aminoadipate 6-phosphate to yield [LysW]-aminoadipate 6-semialdehyde. The sequence is that of [LysW]-L-2-aminoadipate 6-phosphate reductase from Deinococcus radiodurans (strain ATCC 13939 / DSM 20539 / JCM 16871 / CCUG 27074 / LMG 4051 / NBRC 15346 / NCIMB 9279 / VKM B-1422 / R1).